Here is a 179-residue protein sequence, read N- to C-terminus: Large ribosomal subunit protein uL5 (179 aa).

The protein belongs to the universal ribosomal protein uL5 family. Part of the 50S ribosomal subunit; part of the 5S rRNA/L5/L18/L25 subcomplex. Contacts the 5S rRNA and the P site tRNA. Forms a bridge to the 30S subunit in the 70S ribosome.

In terms of biological role, this is one of the proteins that bind and probably mediate the attachment of the 5S RNA into the large ribosomal subunit, where it forms part of the central protuberance. In the 70S ribosome it contacts protein S13 of the 30S subunit (bridge B1b), connecting the 2 subunits; this bridge is implicated in subunit movement. Contacts the P site tRNA; the 5S rRNA and some of its associated proteins might help stabilize positioning of ribosome-bound tRNAs. The chain is Large ribosomal subunit protein uL5 from Marinomonas sp. (strain MWYL1).